Here is a 325-residue protein sequence, read N- to C-terminus: Aldo-keto reductase family 1 member A1 (325 aa).

Threonine 2 is modified (N-acetylthreonine). Serine 4 is subject to Phosphoserine. Residues 11–20 (GQKMPLIGLG), threonine 21, and tryptophan 22 each bind NADP(+). Position 38 is a phosphoserine (serine 38). NADP(+) is bound at residue aspartate 45. The Proton donor role is filled by tyrosine 50. An N6-acetyllysine; alternate modification is found at lysine 127. Lysine 127 is subject to N6-succinyllysine; alternate. The residue at position 145 (lysine 145) is an N6-succinyllysine. Serine 162, asparagine 163, serine 211, leucine 213, serine 215, serine 216, lysine 263, serine 264, isoleucine 265, arginine 269, glutamine 272, and asparagine 273 together coordinate NADP(+). The residue at position 211 (serine 211) is a Phosphoserine.

This sequence belongs to the aldo/keto reductase family. As to quaternary structure, monomer. As to expression, widely expressed.

The protein localises to the cytoplasm. It localises to the cytosol. Its subcellular location is the apical cell membrane. It catalyses the reaction a primary alcohol + NADP(+) = an aldehyde + NADPH + H(+). The enzyme catalyses L-gulonate + NADP(+) = aldehydo-D-glucuronate + NADPH + H(+). The catalysed reaction is L-gulono-1,4-lactone + NADP(+) = D-glucurono-3,6-lactone + NADPH + H(+). It carries out the reaction allyl alcohol + NADP(+) = acrolein + NADPH + H(+). It catalyses the reaction glycerol + NADP(+) = D-glyceraldehyde + NADPH + H(+). The enzyme catalyses glycerol + NADP(+) = L-glyceraldehyde + NADPH + H(+). The catalysed reaction is hydroxyacetone + NADP(+) = methylglyoxal + NADPH + H(+). It carries out the reaction 3-deoxyfructose + NADP(+) = 3-deoxyglucosone + NADPH + H(+). It catalyses the reaction (R)-mevalonate + NADP(+) = (R)-mevaldate + NADPH + H(+). The enzyme catalyses pyridine 3-methanol + NADP(+) = pyridine-3-carbaldehyde + NADPH + H(+). The catalysed reaction is S-nitroso-CoA + NADPH + H(+) = sulfinamide-CoA + NADP(+). It carries out the reaction S-nitrosoglutathione + NADPH + H(+) = S-(hydroxysulfenamide)glutathione + NADP(+). Its function is as follows. Catalyzes the NADPH-dependent reduction of a wide variety of carbonyl-containing compounds to their corresponding alcohols. Displays enzymatic activity towards endogenous metabolites such as aromatic and aliphatic aldehydes, ketones, monosaccharides and bile acids, with a preference for negatively charged substrates, such as glucuronate and succinic semialdehyde. Plays an important role in ascorbic acid biosynthesis by catalyzing the reduction of D-glucuronic acid and D-glucurono-gamma-lactone. Functions as a detoxifiying enzyme by reducing a range of toxic aldehydes. Reduces methylglyoxal and 3-deoxyglucosone, which are present at elevated levels under hyperglycemic conditions and are cytotoxic. Involved in the detoxification of lipid-derived aldehydes like acrolein. Plays a role in the activation of procarcinogens, such as polycyclic aromatic hydrocarbon trans-dihydrodiols, and in the metabolism of various xenobiotics and drugs. Also acts as an inhibitor of protein S-nitrosylation by mediating degradation of S-nitroso-coenzyme A (S-nitroso-CoA), a cofactor required to S-nitrosylate proteins. S-nitroso-CoA reductase activity is involved in reprogramming intermediary metabolism in renal proximal tubules, notably by inhibiting protein S-nitrosylation of isoform 2 of PKM (PKM2). Also acts as a S-nitroso-glutathione reductase by catalyzing the NADPH-dependent reduction of S-nitrosoglutathione. Displays no reductase activity towards retinoids. The polypeptide is Aldo-keto reductase family 1 member A1 (Mus musculus (Mouse)).